A 215-amino-acid chain; its full sequence is LysM and putative peptidoglycan-binding domain-containing protein 2 (215 aa).

The disordered stretch occupies residues 1–40; the sequence is MADSSPALSLREGGPRAPRPSAPSPPPRSRSGSESEEAEL. The residue at position 2 (alanine 2) is an N-acetylalanine. A phosphoserine mark is found at serine 5, serine 24, serine 33, and serine 57. Over residues 17–28 the composition is skewed to pro residues; the sequence is APRPSAPSPPPR. The LysM domain maps to 71–115; the sequence is VEHRVRAGDTLQGIALKYGVTMEQIKRANKLFTNDCIFLKKTLNI. Disordered regions lie at residues 132–175 and 193–215; these read DSPE…EEVS and AAKK…LYHS. Basic and acidic residues predominate over residues 196–205; the sequence is KLKEESRDEE.

The sequence is that of LysM and putative peptidoglycan-binding domain-containing protein 2 (LYSMD2) from Homo sapiens (Human).